A 130-amino-acid polypeptide reads, in one-letter code: Sirohydrochlorin cobaltochelatase (130 aa).

The Proton acceptor role is filled by His-12. A Co(2+)-binding site is contributed by His-12. His-12 is a binding site for Ni(2+). Substrate contacts are provided by residues Glu-48 and 73 to 78 (LASGVH). His-78 contributes to the Co(2+) binding site. Ni(2+) is bound at residue His-78.

The protein belongs to the CbiX family. CbiXS subfamily. Homotetramer; dimer of dimers.

The enzyme catalyses Co-sirohydrochlorin + 2 H(+) = sirohydrochlorin + Co(2+). It carries out the reaction Ni-sirohydrochlorin + 2 H(+) = sirohydrochlorin + Ni(2+). The protein operates within cofactor biosynthesis; adenosylcobalamin biosynthesis; cob(II)yrinate a,c-diamide from sirohydrochlorin (anaerobic route): step 1/10. In terms of biological role, catalyzes the insertion of Co(2+) into sirohydrochlorin as part of the anaerobic pathway to cobalamin biosynthesis. Involved in the biosynthesis of the unique nickel-containing tetrapyrrole coenzyme F430, the prosthetic group of methyl-coenzyme M reductase (MCR), which plays a key role in methanogenesis and anaerobic methane oxidation. Catalyzes the insertion of Ni(2+) into sirohydrochlorin to yield Ni-sirohydrochlorin. This is Sirohydrochlorin cobaltochelatase from Methanosarcina barkeri (strain Fusaro / DSM 804).